Consider the following 191-residue polypeptide: UPF0312 protein SO_3370 (191 aa).

An N-terminal signal peptide occupies residues 1–22 (MKKQLFSALIGASLFAPMAVSA).

It belongs to the UPF0312 family. Type 1 subfamily.

Its subcellular location is the periplasm. The polypeptide is UPF0312 protein SO_3370 (Shewanella oneidensis (strain ATCC 700550 / JCM 31522 / CIP 106686 / LMG 19005 / NCIMB 14063 / MR-1)).